Consider the following 484-residue polypeptide: N-succinylglutamate 5-semialdehyde dehydrogenase (484 aa).

Position 221-226 (221-226 (GSAAAG)) interacts with NAD(+). Catalysis depends on residues Glu-244 and Cys-278.

This sequence belongs to the aldehyde dehydrogenase family. AstD subfamily.

It catalyses the reaction N-succinyl-L-glutamate 5-semialdehyde + NAD(+) + H2O = N-succinyl-L-glutamate + NADH + 2 H(+). It functions in the pathway amino-acid degradation; L-arginine degradation via AST pathway; L-glutamate and succinate from L-arginine: step 4/5. Its function is as follows. Catalyzes the NAD-dependent reduction of succinylglutamate semialdehyde into succinylglutamate. The sequence is that of N-succinylglutamate 5-semialdehyde dehydrogenase from Caulobacter sp. (strain K31).